The primary structure comprises 1410 residues: DNA-directed RNA polymerase subunit beta' (1410 aa).

Zn(2+) is bound by residues Cys-70, Cys-72, Cys-85, and Cys-88. Mg(2+) is bound by residues Asp-460, Asp-462, and Asp-464. 4 residues coordinate Zn(2+): Cys-814, Cys-888, Cys-895, and Cys-898.

The protein belongs to the RNA polymerase beta' chain family. As to quaternary structure, the RNAP catalytic core consists of 2 alpha, 1 beta, 1 beta' and 1 omega subunit. When a sigma factor is associated with the core the holoenzyme is formed, which can initiate transcription. The cofactor is Mg(2+). Zn(2+) serves as cofactor.

The enzyme catalyses RNA(n) + a ribonucleoside 5'-triphosphate = RNA(n+1) + diphosphate. Its function is as follows. DNA-dependent RNA polymerase catalyzes the transcription of DNA into RNA using the four ribonucleoside triphosphates as substrates. This Buchnera aphidicola subsp. Cinara cedri (strain Cc) protein is DNA-directed RNA polymerase subunit beta'.